The sequence spans 109 residues: Cell division protein ZapA (109 aa).

A coiled-coil region spans residues 21 to 99; the sequence is PEQQEALNQA…IEQALLEQGK (79 aa).

This sequence belongs to the ZapA family. Type 1 subfamily. In terms of assembly, homodimer. Interacts with FtsZ.

The protein resides in the cytoplasm. Functionally, activator of cell division through the inhibition of FtsZ GTPase activity, therefore promoting FtsZ assembly into bundles of protofilaments necessary for the formation of the division Z ring. It is recruited early at mid-cell but it is not essential for cell division. This is Cell division protein ZapA from Pectobacterium atrosepticum (strain SCRI 1043 / ATCC BAA-672) (Erwinia carotovora subsp. atroseptica).